The sequence spans 283 residues: 2-dehydro-3-deoxyphosphooctonate aldolase (283 aa).

It belongs to the KdsA family.

Its subcellular location is the cytoplasm. The catalysed reaction is D-arabinose 5-phosphate + phosphoenolpyruvate + H2O = 3-deoxy-alpha-D-manno-2-octulosonate-8-phosphate + phosphate. The protein operates within carbohydrate biosynthesis; 3-deoxy-D-manno-octulosonate biosynthesis; 3-deoxy-D-manno-octulosonate from D-ribulose 5-phosphate: step 2/3. Its pathway is bacterial outer membrane biogenesis; lipopolysaccharide biosynthesis. This chain is 2-dehydro-3-deoxyphosphooctonate aldolase, found in Synechococcus sp. (strain WH7803).